Consider the following 336-residue polypeptide: Large ribosomal subunit protein uL3 (336 aa).

Disordered regions lie at residues 1-43 (MPQP…QGFA), 205-230 (ITKGKGTQGPVKRWGVQKRKGKHARQ), and 311-336 (RPAVRPGDQPRLDPEVRYVSTASNQG). The span at 219–230 (GVQKRKGKHARQ) shows a compositional bias: basic residues.

It belongs to the universal ribosomal protein uL3 family. Part of the 50S ribosomal subunit. Forms a cluster with proteins L14 and L24e.

One of the primary rRNA binding proteins, it binds directly near the 3'-end of the 23S rRNA, where it nucleates assembly of the 50S subunit. The polypeptide is Large ribosomal subunit protein uL3 (Natronomonas pharaonis (strain ATCC 35678 / DSM 2160 / CIP 103997 / JCM 8858 / NBRC 14720 / NCIMB 2260 / Gabara) (Halobacterium pharaonis)).